We begin with the raw amino-acid sequence, 486 residues long: Patatin-like phospholipase domain-containing protein 2 (486 aa).

The Cytoplasmic portion of the chain corresponds to 1–8; that stretch reads MFPKETTW. A helical membrane pass occupies residues 9–29; it reads NISFAGCGFLGVYHIGVASCL. Residues 10–179 enclose the PNPLA domain; that stretch reads ISFAGCGFLG…SDNLPLYELK (170 aa). Positions 14 to 19 match the GXGXXG motif; the sequence is GCGFLG. The Extracellular segment spans residues 30–42; the sequence is REHAPFLVANATH. N39 carries an N-linked (GlcNAc...) asparagine glycan. Residues 43–63 form a helical membrane-spanning segment; that stretch reads IYGASAGALTATALVTGACLG. Residues 45–49 carry the GXSXG motif; it reads GASAG. S47 functions as the Nucleophile in the catalytic mechanism. Residues 64 to 137 are Cytoplasmic-facing; that stretch reads EAGANIIEVS…IITHFNSKEE (74 aa). Residue K92 forms a Glycyl lysine isopeptide (Lys-Gly) (interchain with G-Cter in ubiquitin) linkage. The helical transmembrane segment at 138–158 threads the bilayer; it reads LIQANVCSTFIPVYCGLIPPS. Over 159–334 the chain is Extracellular; sequence LQGVRYVDGG…TTLSNMLPVR (176 aa). The active-site Proton acceptor is D166. The short motif at 166 to 168 is the DGA/G element; the sequence is DGG. A helical transmembrane segment spans residues 335-355; sequence LAMAMMVPYTLPLESAVSFTI. The Cytoplasmic segment spans residues 356-486; it reads RLLEWLPDVP…PQHPPSSPPC (131 aa). S377 is subject to Phosphoserine; in vitro. 2 positions are modified to phosphoserine; by PKA: S399 and S409. The residue at position 433 (S433) is a Phosphoserine; in vitro.

As to quaternary structure, interacts with ABHD5; this association stimulates PNPLA2 triglyceride hydrolase activity. Interacts with SERPINF1; this interaction stimulates the phospholipase A2 activity of PNPLA2. Despite a colocalization in lipid droplets, it probably does not interact with PLIN. Interacts with PLIN5; prevents interaction with ABHD5. Interacts with FAF2. Phosphorylation at Ser-409 by PKA is increased during fasting and moderate intensity exercise, and moderately increases lipolytic activity. Post-translationally, ubiquitinated by PEX2 in response to reactive oxygen species (ROS), leading to its degradation. Ubiquitination is stimulated by LDAH.

Its subcellular location is the lipid droplet. It is found in the cell membrane. The protein localises to the cytoplasm. The catalysed reaction is a triacylglycerol + H2O = a diacylglycerol + a fatty acid + H(+). The enzyme catalyses a triacylglycerol + H2O = a 1,2-diacylglycerol + a fatty acid + H(+). It catalyses the reaction a triacylglycerol + H2O = a 1,3-diacylglycerol + a fatty acid + H(+). It carries out the reaction a triacyl-sn-glycerol + H2O = a 1,3-diacyl-sn-glycerol + a fatty acid + H(+). The catalysed reaction is a triacyl-sn-glycerol + H2O = a 2,3-diacyl-sn-glycerol + a fatty acid + H(+). The enzyme catalyses a 1-acylglycerol + a 1,3-diacylglycerol = a triacylglycerol + glycerol. It catalyses the reaction a 1-acylglycerol + a 1,2-diacylglycerol = a triacylglycerol + glycerol. It carries out the reaction 2 a 1-acylglycerol = a 1,2-diacylglycerol + glycerol. The catalysed reaction is a triacylglycerol + all-trans-retinol = an all-trans-retinyl ester + a diacylglycerol. The enzyme catalyses 1,2-di-(9Z-octadecenoyl)-glycerol + (9Z)-octadecenoate + H(+) = 1,2,3-tri-(9Z-octadecenoyl)-glycerol + H2O. It catalyses the reaction 1,2,3-tri-(9Z-octadecenoyl)-glycerol + H2O = 1,3-di-(9Z-octadecenoyl)-glycerol + (9Z)-octadecenoate + H(+). It carries out the reaction 1-(9Z-octadecenoyl)-glycerol + 1,3-di-(9Z-octadecenoyl)-glycerol = 1,2,3-tri-(9Z-octadecenoyl)-glycerol + glycerol. The catalysed reaction is 1-(9Z-octadecenoyl)-glycerol + 1,2-di-(9Z-octadecenoyl)-glycerol = 1,2,3-tri-(9Z-octadecenoyl)-glycerol + glycerol. The enzyme catalyses 2 1-(9Z-octadecenoyl)-glycerol = 1,2-di-(9Z-octadecenoyl)-glycerol + glycerol. It catalyses the reaction 1,2,3-tri-(9Z-octadecenoyl)-glycerol + all-trans-retinol = all-trans-retinyl 9Z-octadecenoate + di-(9Z)-octadecenoylglycerol. It carries out the reaction 1,2,3-tri-(9Z)-hexadecenoylglycerol + H2O = 1,3-di-(9Z)-hexadecenoylglycerol + (9Z)-hexadecenoate + H(+). The catalysed reaction is 1,2,3-tri-(9Z,12Z)-octadecadienoylglycerol + H2O = 1,3-di-(9Z,12Z)-octadecadienoylglycerol + (9Z,12Z)-octadecadienoate + H(+). The enzyme catalyses 1,2,3-tri-(9Z,12Z,15Z)-octadecatrienoylglycerol + H2O = 1,3-di-(9Z,12Z,15Z)-octadecatrienoylglycerol + (9Z,12Z,15Z)-octadecatrienoate + H(+). It catalyses the reaction 1,3-di-(9Z)-octadecenoyl-2-hexadecanoylglycerol + H2O = 1,3-di-(9Z-octadecenoyl)-glycerol + hexadecanoate + H(+). It carries out the reaction 1,2-di-(9Z)-octadecenoyl-3-hexadecanoyl-sn-glycerol + H2O = 1-(9Z)-octadecenoyl-3-hexadecanoyl-sn-glycerol + (9Z)-octadecenoate + H(+). The catalysed reaction is 1-hexadecanoyl-2,3-di-(9Z)-octadecenoyl-sn-glycerol + H2O = 1-hexadecanoyl-3-(9Z)-octadecenoyl-sn-glycerol + (9Z)-octadecenoate + H(+). The enzyme catalyses 1,2,3-tri-(9Z-octadecenoyl)-glycerol + H2O = 2,3-di-(9Z)-octadecenoyl-sn-glycerol + (9Z)-octadecenoate + H(+). It catalyses the reaction 1,2,3-tri-(9Z)-hexadecenoylglycerol + H2O = 2,3-di-(9Z)-hexadecenoyl-sn-glycerol + (9Z)-hexadecenoate + H(+). It carries out the reaction 1,2,3-tri-(9Z,12Z)-octadecadienoylglycerol + H2O = 2,3-di-(9Z,12Z)-octadecadienoyl-sn-glycerol + (9Z,12Z)-octadecadienoate + H(+). The catalysed reaction is 1,2,3-tri-(9Z,12Z,15Z)-octadecatrienoylglycerol + H2O = 2,3-di-(9Z,12Z,15Z)-octadecatrienoyl-sn-glycerol + (9Z,12Z,15Z)-octadecatrienoate + H(+). The enzyme catalyses 1,3-di-(9Z)-octadecenoyl-2-hexadecanoylglycerol + H2O = 2-hexadecanoyl-3-(9Z)-octadecenoyl-sn-glycerol + (9Z)-octadecenoate + H(+). It catalyses the reaction 1-hexadecanoyl-2,3-di-(9Z)-octadecenoyl-sn-glycerol + H2O = 2,3-di-(9Z)-octadecenoyl-sn-glycerol + hexadecanoate + H(+). It carries out the reaction 1,2-di-(9Z)-octadecenoyl-3-hexadecanoyl-sn-glycerol + H2O = 2-(9Z-octadecenoyl)-3-hexadecanoyl-sn-glycerol + (9Z)-octadecenoate + H(+). The catalysed reaction is a 1,2-diacyl-sn-glycero-3-phosphocholine + H2O = a 1-acyl-sn-glycero-3-phosphocholine + a fatty acid + H(+). The enzyme catalyses 1,2,3-tri-(9Z-octadecenoyl)-glycerol + 9-hydroxy-octadecanoate = 9-(9Z-octadecenoyloxy)-octadecanoate + 2,3-di-(9Z)-octadecenoyl-sn-glycerol. It catalyses the reaction 1-hexadecanoyl-2,3-di-(9Z)-octadecenoyl-sn-glycerol + 9-hydroxy-octadecanoate = 9-hexadecanoyloxy-octadecanoate + 2,3-di-(9Z)-octadecenoyl-sn-glycerol. It carries out the reaction 1,2,3-tri-(10Z)-heptadecenoylglycerol + 9-hydroxy-octadecanoate = 2,3-di-(10Z-heptadecenoyl)-sn-glycerol + 9-(10Z-heptadecenoyloxy)-octadecanoate. The catalysed reaction is 1,2,3-tri-(9Z,12Z)-octadecadienoylglycerol + 9-hydroxy-octadecanoate = 2,3-di-(9Z,12Z)-octadecadienoyl-sn-glycerol + 9-(9Z,12Z-octadecadienoyloxy)-octadecanoate. The enzyme catalyses 1,2,3-tri-(9Z)-hexadecenoylglycerol + 9-hydroxy-octadecanoate = 2,3-di-(9Z)-hexadecenoyl-sn-glycerol + 9-(9Z-hexadecenoyloxy)-octadecanoate. It catalyses the reaction 9-hydroxy-octadecanoate + 1,2-di-(9Z-octadecenoyl)-sn-glycerol = 9-(9Z-octadecenoyloxy)-octadecanoate + 2-(9Z-octadecenoyl)-glycerol. It carries out the reaction 1-hexadecanoyl-2,3-di-(9Z)-octadecenoyl-sn-glycerol + 9-hydroxy-octadecanoate = 1-hexadecanoyl-3-(9Z)-octadecenoyl-sn-glycerol + 9-(9Z-octadecenoyloxy)-octadecanoate. The protein operates within glycerolipid metabolism; triacylglycerol degradation. Catalyzes the initial step in triglyceride hydrolysis in adipocyte and non-adipocyte lipid droplets. Exhibits a strong preference for the hydrolysis of long-chain fatty acid esters at the sn-2 position of the glycerol backbone and acts coordinately with LIPE/HLS and DGAT2 within the lipolytic cascade. Also possesses acylglycerol transacylase and phospholipase A2 activities. Transfers fatty acid from triglyceride to retinol, hydrolyzes retinylesters, and generates 1,3-diacylglycerol from triglycerides. Regulates adiposome size and may be involved in the degradation of adiposomes. Catalyzes the formation of an ester bond between hydroxy fatty acids and fatty acids derived from triglycerides or diglycerides to generate fatty acid esters of hydroxy fatty acids (FAHFAs) in adipocytes. Acts antagonistically with LDAH in regulation of cellular lipid stores. Inhibits LDAH-stimulated lipid droplet fusion. May play an important role in energy homeostasis. May play a role in the response of the organism to starvation, enhancing hydrolysis of triglycerides and providing free fatty acids to other tissues to be oxidized in situations of energy depletion. The polypeptide is Patatin-like phospholipase domain-containing protein 2 (PNPLA2) (Bos taurus (Bovine)).